The following is a 367-amino-acid chain: DNA replication and repair protein RecF (367 aa).

30–37 (GANGSGKT) provides a ligand contact to ATP.

It belongs to the RecF family.

Its subcellular location is the cytoplasm. In terms of biological role, the RecF protein is involved in DNA metabolism; it is required for DNA replication and normal SOS inducibility. RecF binds preferentially to single-stranded, linear DNA. It also seems to bind ATP. This is DNA replication and repair protein RecF from Pseudomonas fluorescens (strain ATCC BAA-477 / NRRL B-23932 / Pf-5).